A 239-amino-acid polypeptide reads, in one-letter code: Leucine rich adaptor protein 1 (239 aa).

LRR repeat units follow at residues 55–83 (LGDK…LVTL) and 93–114 (LLEE…QYSL). A compositionally biased stretch (low complexity) spans 105 to 116 (SSLTSSQYSLTG). Positions 105 to 138 (SSLTSSQYSLTGGSPGRSRRGSWDSLPDTSSTDR) are disordered. Phosphoserine occurs at positions 118, 126, and 129.

As to quaternary structure, forms a tripartite complex with CDC42BPA/CDC42BPB and MYO18A acting as an adapter connecting both. Its binding to CDC42BPA/CDC42BPB results in their activation by abolition of their negative autoregulation. Interacts with CDC42BPA and CDC42BPB. In terms of processing, phosphorylated.

It is found in the cytoplasm. Functionally, acts as an activator of the canonical NF-kappa-B pathway and drive the production of pro-inflammatory cytokines. Promotes the antigen (Ag)-presenting and priming function of dendritic cells via the canonical NF-kappa-B pathway. In concert with MYO18A and CDC42BPA/CDC42BPB, is involved in modulating lamellar actomyosin retrograde flow that is crucial to cell protrusion and migration. Activates CDC42BPA/CDC42BPB and targets it to actomyosin through its interaction with MYO18A, leading to MYL9/MLC2 phosphorylation and MYH9/MYH10-dependent actomyosin assembly in the lamella. This chain is Leucine rich adaptor protein 1 (Lurap1), found in Mus musculus (Mouse).